Reading from the N-terminus, the 346-residue chain is Uroporphyrinogen decarboxylase (346 aa).

Substrate-binding positions include 26 to 30, Asp-76, Tyr-153, Ser-208, and His-323; that span reads RQAGR.

It belongs to the uroporphyrinogen decarboxylase family. Homodimer.

The protein resides in the cytoplasm. The catalysed reaction is uroporphyrinogen III + 4 H(+) = coproporphyrinogen III + 4 CO2. It participates in porphyrin-containing compound metabolism; protoporphyrin-IX biosynthesis; coproporphyrinogen-III from 5-aminolevulinate: step 4/4. Its function is as follows. Catalyzes the decarboxylation of four acetate groups of uroporphyrinogen-III to yield coproporphyrinogen-III. This is Uroporphyrinogen decarboxylase from Prochlorococcus marinus (strain MIT 9215).